Here is a 137-residue protein sequence, read N- to C-terminus: Kunitz-type trypsin inhibitor alpha chain (137 aa).

Cys-40 and Cys-86 form a disulfide bridge.

Belongs to the protease inhibitor I3 (leguminous Kunitz-type inhibitor) family. As to quaternary structure, heterodimer of an alpha and a beta chain linked by a disulfide bond.

Functionally, inhibition of trypsin. The protein is Kunitz-type trypsin inhibitor alpha chain of Neltuma juliflora (Mesquite).